The chain runs to 533 residues: DELLA protein GAI (533 aa).

Residues 1–12 (MKRDHHHHHHQD) are compositionally biased toward basic residues. A disordered region spans residues 1 to 24 (MKRDHHHHHHQDKKTMMMNEEDDG). Positions 28–32 (DELLA) match the DELLA motif motif. The LEXLE motif motif lies at 50-54 (LEQLE). Positions 73–77 (VHYNP) match the VHYNP motif motif. Residues 160–529 (VDSQENGVRL…RPLIATSAWK (370 aa)) form the GRAS domain. Residues 167-221 (VRLVHALLACAEAVQKENLTVAEALVKQIGFLAVSQIGAMRKVATYFAEALARRI) form a leucine repeat I (LRI) region. The LxCxE motif motif lies at 174-178 (LACAE). A VHIID region spans residues 240 to 305 (QMHFYETCPY…GGPPVFRLTG (66 aa)). The VHIID signature appears at 271-275 (VHVID). The interval 319–351 (EVGCKLAHLAEAIHVEFEYRGFVANTLADLDAS) is leucine repeat II (LRII). The interval 363–450 (VAVNSVFELH…EVYLGKQICN (88 aa)) is PFYRE. The LXXLL motif signature appears at 371-375 (LHKLL). Residues 453 to 529 (ACDGPDRVER…RPLIATSAWK (77 aa)) form an SAW region.

The protein belongs to the GRAS family. DELLA subfamily. As to quaternary structure, interacts directly with the GID2/SLY1 component of the SCF(GID2) complex. Interacts (via N-terminus) with GID1A, GID1B and GID1B (via N-terminus). Interacts with the BOI proteins BOI, BRG1, BRG2, BRG3 and NUP58. Interacts with TOPP4. Interacts with TCP14 and TCP15. Interacts with FLZ5. Binds to and coactivates GAF1/IDD2 and ENY/IDD1 at the promoter of GA20OX2 gene. Binds to PDF2 and ATML1. Interacts with the prefoldin alpha subunits PFD3 and PFD5 in the nucleus. In terms of processing, phosphorylated. Post-translationally, gibberellin (GA) induces dephosphorylation of GAI by TOPP4 and subsequent degradation by the proteasomal pathway. May be ubiquitinated, as suggested by its interaction with GID2. Ubiquitination is however unsure since in contrast to other DELLA proteins, it is not ubiquitinated and degraded upon GA application. Nevertheless, ubiquitination may be triggered by other processes. As to expression, ubiquitously expressed. Expressed in rosette leaves, roots, stems and inflorescences of greenhouse grown.

It is found in the nucleus. Transcription activation is repressed by gibberellic acid GA(3) in the presence of TPR4. In terms of biological role, transcriptional regulator that acts as a repressor of the gibberellin (GA) signaling pathway. Transcription coactivator of the zinc finger transcription factors GAF1/IDD2 and ENY/IDD1 in regulation of gibberellin homeostasis and signaling. No effect of the BOI proteins on its stability. Probably acts by participating in large multiprotein complexes that repress transcription of GA-inducible genes. Positively regulates XERICO expression. In contrast to RGA, it is less sensitive to GA. Its activity is probably regulated by other phytohormones such as auxin and ethylene. Involved in the regulation of seed dormancy and germination, including glucose-induced delay of seed germination. Involved in the process leading to microtubules (MTs) dissociation in response to gibberellic acid (GA) probably by mediating the translocation of the prefoldin co-chaperone complex from the cytoplasm to the nucleus. This is DELLA protein GAI from Arabidopsis thaliana (Mouse-ear cress).